A 96-amino-acid polypeptide reads, in one-letter code: UPF0213 protein Lreu_0682 (96 aa).

The 78-residue stretch at 4 to 81 folds into the GIY-YIG domain; the sequence is EKYYIYVLYC…KHQTRRQKEK (78 aa).

This sequence belongs to the UPF0213 family.

The sequence is that of UPF0213 protein Lreu_0682 from Limosilactobacillus reuteri (strain DSM 20016) (Lactobacillus reuteri).